We begin with the raw amino-acid sequence, 2259 residues long: Golgin subfamily A member 4 (2259 aa).

Residues 1 to 54 (MFKKLKQKISEEQQQLQQALAPAQASSSSSTPTRTRSRTSSFTDQLDDATPNRE) form a disordered region. Ser10 carries the post-translational modification Phosphoserine. A compositionally biased stretch (low complexity) spans 12 to 41 (EQQQLQQALAPAQASSSSSTPTRTRSRTSS). Thr39 carries the phosphothreonine modification. Phosphoserine occurs at positions 41, 104, and 111. The tract at residues 165-235 (SLSREQLLQR…EELQMDQQAK (71 aa)) is interaction with MACF1. Positions 167–2182 (SREQLLQRLR…SYEKSVCAAA (2016 aa)) form a coiled coil. Composition is skewed to basic and acidic residues over residues 1932–1946 (LEDR…HVIE) and 1954–1977 (DGRH…LSKE). The segment at 1932–1977 (LEDRPEENSKSHVIESKLGTPMDGRHSDLESKLAGSEREKQKLSKE) is disordered. A GRIP domain is found at 2199–2246 (LFGEPTEFEYLRKVLFEYMMGRETKTMAKVITTVLRFPDDQAQKILER).

In terms of assembly, homodimer. Interacts with GTP-bound ARL1 and ARL3. Interacts with MACF1. Directly interacts with TBC1D23. Interacts with FAM91A1; this interaction may be mediated by TBC1D23. As to expression, expressed in the head of epididymal sperm but not in testicular sperm (at protein level).

The protein localises to the cytoplasm. The protein resides in the golgi apparatus membrane. It localises to the golgi apparatus. It is found in the trans-Golgi network membrane. Functionally, involved in vesicular trafficking at the Golgi apparatus level. May play a role in delivery of transport vesicles containing GPI-linked proteins from the trans-Golgi network through its interaction with MACF1. Involved in endosome-to-Golgi trafficking. This chain is Golgin subfamily A member 4, found in Rattus norvegicus (Rat).